A 414-amino-acid polypeptide reads, in one-letter code: Tyrosine--tRNA ligase (414 aa).

Tyr40 lines the L-tyrosine pocket. The short motif at 45 to 54 (ATAASLHVGH) is the 'HIGH' region element. L-tyrosine-binding residues include Tyr175 and Gln179. The 'KMSKS' region motif lies at 235–239 (KMGKS). Residue Lys238 coordinates ATP. In terms of domain architecture, S4 RNA-binding spans 349–414 (LTVVQLLAQT…KKKHRMVQLG (66 aa)).

It belongs to the class-I aminoacyl-tRNA synthetase family. TyrS type 1 subfamily. In terms of assembly, homodimer.

The protein localises to the cytoplasm. The enzyme catalyses tRNA(Tyr) + L-tyrosine + ATP = L-tyrosyl-tRNA(Tyr) + AMP + diphosphate + H(+). Catalyzes the attachment of tyrosine to tRNA(Tyr) in a two-step reaction: tyrosine is first activated by ATP to form Tyr-AMP and then transferred to the acceptor end of tRNA(Tyr). In Paracoccus denitrificans (strain Pd 1222), this protein is Tyrosine--tRNA ligase.